Reading from the N-terminus, the 71-residue chain is MGSTMDKIKGQANELAGKAKQGIGEATGSDKLKGEGAIQEAKGHGQQALGNAKDAVKDTADKVAGAAHKNL.

Residues 1–54 are disordered; that stretch reads MGSTMDKIKGQANELAGKAKQGIGEATGSDKLKGEGAIQEAKGHGQQALGNAKD.

It belongs to the UPF0337 (CsbD) family.

The sequence is that of UPF0337 protein RPA4418 from Rhodopseudomonas palustris (strain ATCC BAA-98 / CGA009).